Here is a 358-residue protein sequence, read N- to C-terminus: Alanine racemase (358 aa).

K34 functions as the Proton acceptor; specific for D-alanine in the catalytic mechanism. K34 bears the N6-(pyridoxal phosphate)lysine mark. R129 contacts substrate. Y254 (proton acceptor; specific for L-alanine) is an active-site residue. M302 contacts substrate.

This sequence belongs to the alanine racemase family. Requires pyridoxal 5'-phosphate as cofactor.

The catalysed reaction is L-alanine = D-alanine. The protein operates within amino-acid biosynthesis; D-alanine biosynthesis; D-alanine from L-alanine: step 1/1. Functionally, catalyzes the interconversion of L-alanine and D-alanine. May also act on other amino acids. The sequence is that of Alanine racemase (alr) from Hamiltonella defensa subsp. Acyrthosiphon pisum (strain 5AT).